An 843-amino-acid polypeptide reads, in one-letter code: Beta-mannosidase B (843 aa).

The Proton donor role is filled by Glu-430. Asn-721 is a glycosylation site (N-linked (GlcNAc...) asparagine).

The protein belongs to the glycosyl hydrolase 2 family. Beta-mannosidase B subfamily.

The enzyme catalyses Hydrolysis of terminal, non-reducing beta-D-mannose residues in beta-D-mannosides.. It participates in glycan metabolism; N-glycan degradation. Its function is as follows. Exoglycosidase that cleaves the single beta-linked mannose residue from the non-reducing end of beta-mannosidic oligosaccharides of various complexity and length. Prefers mannobiose over mannotriose and has no activity against polymeric mannan. Is also severely restricted by galactosyl substitutions at the +1 subsite. This is Beta-mannosidase B (mndB) from Aspergillus terreus (strain NIH 2624 / FGSC A1156).